The primary structure comprises 300 residues: Protein Bel-1 (300 aa).

The interval 1-50 (MDSYEKEESVASTSGIQDLQTLSELVGPENAGEGELTIAEEPEENPRRPR) is disordered. Polar residues predominate over residues 10-23 (VASTSGIQDLQTLS). A DNA-binding region spans residues 89 to 200 (SKSLCKRLIL…SEGPKPRPRH (112 aa)). The segment at 209 to 244 (FEKHHKPRQKRPRRRSIDNESCASSSDTMANEPGSL) is disordered. Positions 211–222 (KHHKPRQKRPRR) are enriched in basic residues. The Nuclear localization signal motif lies at 214-223 (KPRQKRPRRR). The tract at residues 224-300 (SIDNESCASS…PSGSGEHSVL (77 aa)) is transactivation domain. Polar residues predominate over residues 227–237 (NESCASSSDTM).

Homodimer or homomultimer. Forms complexes with the host nuclear factors NFIA, NFIB, NFIC or NFIX.

The protein resides in the host nucleus. Its function is as follows. Transcriptional transactivator that activates the viral internal promoter (IP), thereby enhancing its own expression. This transactivation is repressed by nuclear factor I. Also transactivates the long terminal repeat (LTR) promoter, thereby inducing structural gene expression, initiating the late phase of infection. It is therefore a key regulator of viral gene expression. It directly binds to and activates DNA target sites of viral promoters and those of distinct cellular genes. Required for viral replication. This chain is Protein Bel-1 (bel1), found in Human spumaretrovirus (SFVcpz(hu)).